We begin with the raw amino-acid sequence, 230 residues long: MSQEQLVAVNELNENLGKVLIKIARDSIANKLGILKINLEDYLSSLNDPILNKKGLAFVTLETYYGNSTSLRGCIGYVEAVAPLKEIVSKAAIAAAFSDPRFPPLSKGEFDNIIIEVTVLTKPQEIDVENRWELPKKIKVGEDGLIVEYGILYSGLLLPQVPMEYCWDEETFLAETCIKAGLEPDCWLNNKVKIKKFQGIIFREEKPKSEKILIIKPSEVKCKKEEISLL.

Residues 15 to 213 (NLGKVLIKIA…EEKPKSEKIL (199 aa)) form the AMMECR1 domain.

This chain is Protein STK_02290, found in Sulfurisphaera tokodaii (strain DSM 16993 / JCM 10545 / NBRC 100140 / 7) (Sulfolobus tokodaii).